The primary structure comprises 525 residues: Ankyrin repeat and SOCS box protein 3 (525 aa).

ANK repeat units lie at residues 9–38 (DTCS…SIDV), 42–71 (RGWM…SENY), 78–107 (EGFC…DPNA), 111–140 (EETT…NVNG), 145–174 (CGWN…NKEC), 178–207 (FGIT…DVNC), 211–240 (DKAT…DPDL), 246–275 (NWQL…RVCD), 279–308 (NKVS…SPDA), 315–346 (GFSS…QLNE), and 348–373 (HLAY…PSTP). In terms of domain architecture, SOCS box spans 441-505 (MLSARASNSS…HDYLLYAEVL (65 aa)).

Belongs to the ankyrin SOCS box (ASB) family. In terms of assembly, interacts with ELOB and TNFRSF1B.

The protein operates within protein modification; protein ubiquitination. In terms of biological role, probable substrate-recognition component of a SCF-like ECS (Elongin-Cullin-SOCS-box protein) E3 ubiquitin-protein ligase complex which mediates the ubiquitination and subsequent proteasomal degradation of target proteins. Recognizes TNFRSF1B. This is Ankyrin repeat and SOCS box protein 3 (ASB3) from Bos taurus (Bovine).